A 450-amino-acid chain; its full sequence is Ig mu chain C region (450 aa).

This chain is Ig mu chain C region, found in Canis lupus familiaris (Dog).